A 232-amino-acid polypeptide reads, in one-letter code: Thiamine import ATP-binding protein ThiQ (232 aa).

The ABC transporter domain occupies 2-230; it reads LKLTDITWLY…KGSASAIWGI (229 aa). 32-39 contacts ATP; it reads GPSGAGKS.

This sequence belongs to the ABC transporter superfamily. Thiamine importer (TC 3.A.1.19.1) family. As to quaternary structure, the complex is composed of two ATP-binding proteins (ThiQ), two transmembrane proteins (ThiP) and a solute-binding protein (ThiB).

It is found in the cell inner membrane. It carries out the reaction thiamine(out) + ATP + H2O = thiamine(in) + ADP + phosphate + H(+). In terms of biological role, part of the ABC transporter complex ThiBPQ involved in thiamine import. Responsible for energy coupling to the transport system. In Shigella flexneri, this protein is Thiamine import ATP-binding protein ThiQ.